The primary structure comprises 346 residues: Holliday junction branch migration complex subunit RuvB (346 aa).

A compositionally biased stretch (polar residues) spans 1 to 11 (MTEQRTIASSA). The tract at residues 1 to 20 (MTEQRTIASSATREDEAADA) is disordered. The tract at residues 1–183 (MTEQRTIASS…FGIVQRLEFY (183 aa)) is large ATPase domain (RuvB-L). ATP is bound by residues isoleucine 22, arginine 23, glycine 64, lysine 67, threonine 68, threonine 69, 130–132 (EDF), arginine 173, tyrosine 183, and arginine 220. Threonine 68 contacts Mg(2+). A small ATPAse domain (RuvB-S) region spans residues 184 to 254 (SPQELTRIVI…VAQAAMQMLK (71 aa)). Residues 257–346 (PEGFDELDRR…PAIGEPGDLF (90 aa)) are head domain (RuvB-H). Arginine 293, arginine 312, and arginine 317 together coordinate DNA.

The protein belongs to the RuvB family. As to quaternary structure, homohexamer. Forms an RuvA(8)-RuvB(12)-Holliday junction (HJ) complex. HJ DNA is sandwiched between 2 RuvA tetramers; dsDNA enters through RuvA and exits via RuvB. An RuvB hexamer assembles on each DNA strand where it exits the tetramer. Each RuvB hexamer is contacted by two RuvA subunits (via domain III) on 2 adjacent RuvB subunits; this complex drives branch migration. In the full resolvosome a probable DNA-RuvA(4)-RuvB(12)-RuvC(2) complex forms which resolves the HJ.

The protein resides in the cytoplasm. The enzyme catalyses ATP + H2O = ADP + phosphate + H(+). Its function is as follows. The RuvA-RuvB-RuvC complex processes Holliday junction (HJ) DNA during genetic recombination and DNA repair, while the RuvA-RuvB complex plays an important role in the rescue of blocked DNA replication forks via replication fork reversal (RFR). RuvA specifically binds to HJ cruciform DNA, conferring on it an open structure. The RuvB hexamer acts as an ATP-dependent pump, pulling dsDNA into and through the RuvAB complex. RuvB forms 2 homohexamers on either side of HJ DNA bound by 1 or 2 RuvA tetramers; 4 subunits per hexamer contact DNA at a time. Coordinated motions by a converter formed by DNA-disengaged RuvB subunits stimulates ATP hydrolysis and nucleotide exchange. Immobilization of the converter enables RuvB to convert the ATP-contained energy into a lever motion, pulling 2 nucleotides of DNA out of the RuvA tetramer per ATP hydrolyzed, thus driving DNA branch migration. The RuvB motors rotate together with the DNA substrate, which together with the progressing nucleotide cycle form the mechanistic basis for DNA recombination by continuous HJ branch migration. Branch migration allows RuvC to scan DNA until it finds its consensus sequence, where it cleaves and resolves cruciform DNA. The chain is Holliday junction branch migration complex subunit RuvB from Xanthomonas campestris pv. campestris (strain 8004).